Consider the following 185-residue polypeptide: MISSNDFRPGVSIEWNNGVWRVVEFLHVKPGKGSAFVRTKLKNVQNGNVVEQTFRAGEMVPQANLEKSLMQHTYKEGDQYVFMDMETYEEARLTAAQIGDRVKYLKEGMEASVIRWGEQVMEVELPNSVVLEVVQTDPGVKGDTATGGTKPAIVETGAQVMVPLFITVGERIKIDTRNDSYLGRE.

Belongs to the elongation factor P family.

It localises to the cytoplasm. It participates in protein biosynthesis; polypeptide chain elongation. In terms of biological role, involved in peptide bond synthesis. Stimulates efficient translation and peptide-bond synthesis on native or reconstituted 70S ribosomes in vitro. Probably functions indirectly by altering the affinity of the ribosome for aminoacyl-tRNA, thus increasing their reactivity as acceptors for peptidyl transferase. This is Elongation factor P from Cyanothece sp. (strain PCC 7425 / ATCC 29141).